A 195-amino-acid chain; its full sequence is uncharacterized protein (195 aa).

The Nudix hydrolase domain maps to 34-165; that stretch reads SHHAAVLIPI…WLDIHRGGVN (132 aa). A Nudix box motif is present at residues 72–94; sequence GKADPQDSSLIETALREAEEEVA. Glutamate 88 and glutamate 92 together coordinate Mg(2+).

It belongs to the Nudix hydrolase family. PCD1 subfamily. Mn(2+) serves as cofactor. The cofactor is Mg(2+).

Functionally, probably mediates the hydrolysis of some nucleoside diphosphate derivatives. This is an uncharacterized protein from Yersinia enterocolitica serotype O:8 / biotype 1B (strain NCTC 13174 / 8081).